Consider the following 92-residue polypeptide: Cell division protein FtsB (92 aa).

Over 1 to 3 (MRL) the chain is Cytoplasmic. Residues 4-21 (LILILLSVLVLFQHDFWF) traverse the membrane as a helical segment. The Periplasmic segment spans residues 22–92 (GSNGFLDYRQ…VFYHIVKESK (71 aa)). Residues 28–63 (DYRQNAEKIKENQAENEKLSQRNQRINAEIQGLTKG) are a coiled coil.

This sequence belongs to the FtsB family. Part of a complex composed of FtsB, FtsL and FtsQ.

It localises to the cell inner membrane. Essential cell division protein. May link together the upstream cell division proteins, which are predominantly cytoplasmic, with the downstream cell division proteins, which are predominantly periplasmic. The chain is Cell division protein FtsB from Haemophilus influenzae (strain PittEE).